The following is a 243-amino-acid chain: Type III pantothenate kinase (243 aa).

6–13 contacts ATP; that stretch reads DIGNTVAK. Substrate is bound by residues Tyr86 and 93 to 96; that span reads GYDR. Residue Asp95 is the Proton acceptor of the active site. Asp116 is a K(+) binding site. Residue Thr119 participates in ATP binding. Residue Thr171 participates in substrate binding.

It belongs to the type III pantothenate kinase family. As to quaternary structure, homodimer. NH4(+) is required as a cofactor. It depends on K(+) as a cofactor.

It localises to the cytoplasm. The enzyme catalyses (R)-pantothenate + ATP = (R)-4'-phosphopantothenate + ADP + H(+). It functions in the pathway cofactor biosynthesis; coenzyme A biosynthesis; CoA from (R)-pantothenate: step 1/5. Catalyzes the phosphorylation of pantothenate (Pan), the first step in CoA biosynthesis. The polypeptide is Type III pantothenate kinase (Bacteroides fragilis (strain YCH46)).